Here is a 282-residue protein sequence, read N- to C-terminus: Light-independent protochlorophyllide reductase iron-sulfur ATP-binding protein (282 aa).

Residues 10 to 15 and Lys39 contribute to the ATP site; that span reads GIGKST. Ser14 is a Mg(2+) binding site. 2 residues coordinate [4Fe-4S] cluster: Cys95 and Cys129. 180-181 is a binding site for ATP; sequence NR.

This sequence belongs to the NifH/BchL/ChlL family. Homodimer. Protochlorophyllide reductase is composed of three subunits; ChlL, ChlN and ChlB. It depends on [4Fe-4S] cluster as a cofactor.

It is found in the plastid. It localises to the cyanelle. The catalysed reaction is chlorophyllide a + oxidized 2[4Fe-4S]-[ferredoxin] + 2 ADP + 2 phosphate = protochlorophyllide a + reduced 2[4Fe-4S]-[ferredoxin] + 2 ATP + 2 H2O. Its pathway is porphyrin-containing compound metabolism; chlorophyll biosynthesis (light-independent). In terms of biological role, component of the dark-operative protochlorophyllide reductase (DPOR) that uses Mg-ATP and reduced ferredoxin to reduce ring D of protochlorophyllide (Pchlide) to form chlorophyllide a (Chlide). This reaction is light-independent. The L component serves as a unique electron donor to the NB-component of the complex, and binds Mg-ATP. This Cyanophora paradoxa protein is Light-independent protochlorophyllide reductase iron-sulfur ATP-binding protein.